Consider the following 353-residue polypeptide: 3'(2'),5'-bisphosphate nucleotidase 1 (353 aa).

The active-site Proton acceptor is the D46. Mg(2+)-binding residues include E71, D134, I136, and D137. T139 (proton acceptor) is an active-site residue. Residues T139, H235, S259, K262, R276, and D288 each contribute to the adenosine 3',5'-bisphosphate site. Residues H235, S259, K262, R276, and D288 each contribute to the AMP site. Mg(2+) is bound at residue D288.

This sequence belongs to the inositol monophosphatase superfamily. Mg(2+) is required as a cofactor. As to expression, expressed in roots, leaves, stems, flowers and siliques.

The catalysed reaction is 3'-phosphoadenylyl sulfate + H2O = adenosine 5'-phosphosulfate + phosphate. It carries out the reaction adenosine 3',5'-bisphosphate + H2O = AMP + phosphate. It catalyses the reaction adenosine 2',5'-bisphosphate + H2O = AMP + phosphate. The enzyme catalyses 1D-myo-inositol 1,4-bisphosphate + H2O = 1D-myo-inositol 4-phosphate + phosphate. The catalysed reaction is 1D-myo-inositol 1,3,4-trisphosphate + H2O = 1D-myo-inositol 3,4-bisphosphate + phosphate. It participates in signal transduction; phosphatidylinositol signaling pathway. Its activity is regulated as follows. Inhibited non-competitively by Li(+) (IC(50)=0.20 mM) and Na(+) (IC(50)=200 mM). In terms of biological role, phosphatase that converts adenosine 3'-phosphate 5'-phosphosulfate (PAPS) to adenosine 5'-phosphosulfate (APS) and 3'(2')-phosphoadenosine 5'-phosphate (PAP) to AMP. May regulate the flux of sulfur in the sulfur-activation pathway by converting PAPS to APS. May play a role in the biosynthesis of sulfate conjugates and RNA processing. Is also able to hydrolyze inositol 1,4-bisphosphate and inositol 1,3,4-trisphosphate. Could be considered as a negative regulator of abscisic acid (ABA)- and stress-responsive genes, through modulating the inositol 1,4,5-trisphosphate (IP3) turnover. Is also involved in salt tolerance. Acts as a suppressor of virus- and transgene-induced silencing. The protein is 3'(2'),5'-bisphosphate nucleotidase 1 of Arabidopsis thaliana (Mouse-ear cress).